The chain runs to 76 residues: Waprin-Rha1 (76 aa).

The N-terminal stretch at 1–24 (MQARVFLLLLGVILLGMMGPMVSA) is a signal peptide. The WAP domain maps to 25–75 (QDGKAGSCPDVNQPIPPLGVCKTTCATDSNCPDIQKCCKNGCGHMSCTRPS). Disulfide bonds link C32–C62, C45–C66, C49–C61, and C55–C71.

Belongs to the venom waprin family. As to expression, expressed by the venom gland.

It is found in the secreted. In terms of biological role, damages membranes of susceptible bacteria. Has no hemolytic activity. Not toxic to mice. Does not inhibit the proteinases elastase and cathepsin G. The polypeptide is Waprin-Rha1 (Rhabdophis tigrinus tigrinus (Tiger keelback snake)).